Here is a 294-residue protein sequence, read N- to C-terminus: Phosphoribosylaminoimidazole-succinocarboxamide synthase (294 aa).

Belongs to the SAICAR synthetase family.

It carries out the reaction 5-amino-1-(5-phospho-D-ribosyl)imidazole-4-carboxylate + L-aspartate + ATP = (2S)-2-[5-amino-1-(5-phospho-beta-D-ribosyl)imidazole-4-carboxamido]succinate + ADP + phosphate + 2 H(+). It functions in the pathway purine metabolism; IMP biosynthesis via de novo pathway; 5-amino-1-(5-phospho-D-ribosyl)imidazole-4-carboxamide from 5-amino-1-(5-phospho-D-ribosyl)imidazole-4-carboxylate: step 1/2. In Rhodococcus jostii (strain RHA1), this protein is Phosphoribosylaminoimidazole-succinocarboxamide synthase.